A 180-amino-acid polypeptide reads, in one-letter code: ATP synthase subunit delta (180 aa).

Belongs to the ATPase delta chain family. F-type ATPases have 2 components, F(1) - the catalytic core - and F(0) - the membrane proton channel. F(1) has five subunits: alpha(3), beta(3), gamma(1), delta(1), epsilon(1). F(0) has three main subunits: a(1), b(2) and c(10-14). The alpha and beta chains form an alternating ring which encloses part of the gamma chain. F(1) is attached to F(0) by a central stalk formed by the gamma and epsilon chains, while a peripheral stalk is formed by the delta and b chains.

It localises to the cell membrane. F(1)F(0) ATP synthase produces ATP from ADP in the presence of a proton or sodium gradient. F-type ATPases consist of two structural domains, F(1) containing the extramembraneous catalytic core and F(0) containing the membrane proton channel, linked together by a central stalk and a peripheral stalk. During catalysis, ATP synthesis in the catalytic domain of F(1) is coupled via a rotary mechanism of the central stalk subunits to proton translocation. Functionally, this protein is part of the stalk that links CF(0) to CF(1). It either transmits conformational changes from CF(0) to CF(1) or is implicated in proton conduction. This chain is ATP synthase subunit delta, found in Bacillus cytotoxicus (strain DSM 22905 / CIP 110041 / 391-98 / NVH 391-98).